Reading from the N-terminus, the 806-residue chain is Integrin beta-7 (806 aa).

A signal peptide spans 1-19 (MVDSSTVLIFLLVLGGGQS). Residues 20-724 (ELDTKITSSG…PQEKGVDHTR (705 aa)) lie on the Extracellular side of the membrane. The region spanning 44 to 92 (SCQPVPSCQKCILSHPSCAWCKQLNFTASGEAEARRCARREELLARGCP) is the PSI domain. Cystine bridges form between C51/C476, C54/C80, C64/C91, C216/C223, C271/C311, C412/C428, C448/C474, C478/C497, C488/C500, C502/C511, C513/C545, C527/C543, C537/C548, C550/C559, C561/C582, C566/C580, C574/C585, C587/C596, C598/C621, C605/C619, C613/C624, C626/C635, C638/C641, C645/C688, C651/C670, and C654/C666. The N-linked (GlcNAc...) asparagine glycan is linked to N68. Residues 98-107 (EPRGRQEVLQ) show a composition bias toward basic and acidic residues. The tract at residues 98 to 123 (EPRGRQEVLQDKPLSQGDRGEGATQL) is disordered. The 240-residue stretch at 150–389 (YPVDLYYLMD…QLIMDAYDSL (240 aa)) folds into the VWFA domain. The Mg(2+) site is built by S161 and S163. Residues S163, D166, D167, and D198 each contribute to the Ca(2+) site. Residue N250 is glycosylated (N-linked (GlcNAc...) asparagine). Ca(2+)-binding residues include N254, D256, P258, and E259. A Mg(2+)-binding site is contributed by E259. Residue N279 is glycosylated (N-linked (GlcNAc...) asparagine). D289 and E373 together coordinate Ca(2+). N-linked (GlcNAc...) asparagine glycosylation is present at N434. 4 I-EGF domains span residues 478–512 (CGDA…QLCE), 513–560 (CSEA…RLCE), 561–597 (CDDA…RACE), and 598–636 (CSKS…ALCD). An N-linked (GlcNAc...) asparagine glycan is attached at N531. N590 carries N-linked (GlcNAc...) asparagine glycosylation. N-linked (GlcNAc...) asparagine glycosylation is found at N665 and N674. The helical transmembrane segment at 725–745 (AIILGCTGGIVAVGLGLVLAY) threads the bilayer. At 746–806 (RLSVEIYDRR…PSLSLTREAD (61 aa)) the chain is on the cytoplasmic side. The tract at residues 786 to 806 (NPRFQGTNGRSPSLSLTREAD) is disordered.

The protein belongs to the integrin beta chain family. Heterodimer of an alpha and a beta subunit. ITGB7/beta-7 associates with either ITGA4/alpha-4 or ITGAE/alpha-E. Integrin ITGA4/ITGB7 interacts with MADCAM1. Integrin ITGA4/ITGB7 interacts with VCAM1 and fibronectin. Interacts with FLNA (via filamin repeats 4, 9, 12, 17, 19, 21, and 23).

It is found in the cell membrane. Functionally, integrin ITGA4/ITGB7 (alpha-4/beta-7) (Peyer patches-specific homing receptor LPAM-1) is an adhesion molecule that mediates lymphocyte migration and homing to gut-associated lymphoid tissue (GALT). Integrin ITGA4/ITGB7 interacts with the cell surface adhesion molecules MADCAM1 which is normally expressed by the vascular endothelium of the gastrointestinal tract. Also interacts with VCAM1 and fibronectin, an extracellular matrix component. It recognizes one or more domains within the alternatively spliced CS-1 region of fibronectin. Interactions involve the tripeptide L-D-T in MADCAM1, and L-D-V in fibronectin. Integrin ITGAE/ITGB7 (alpha-E/beta-7, HML-1) is a receptor for E-cadherin. This is Integrin beta-7 (Itgb7) from Mus musculus (Mouse).